The chain runs to 121 residues: Putative viral protein-binding protein C1 (121 aa).

Positions 21 to 57 (PWDRTRGHPDVPWRNLTSSPTRPLAQPAGSCMPAEPS) are disordered.

Interacts with core protein of hepatitis B virus.

The chain is Putative viral protein-binding protein C1 from Homo sapiens (Human).